The primary structure comprises 129 residues: Small ribosomal subunit protein uS11 (129 aa).

It belongs to the universal ribosomal protein uS11 family. Part of the 30S ribosomal subunit. Interacts with proteins S7 and S18. Binds to IF-3.

Located on the platform of the 30S subunit, it bridges several disparate RNA helices of the 16S rRNA. Forms part of the Shine-Dalgarno cleft in the 70S ribosome. The sequence is that of Small ribosomal subunit protein uS11 from Bartonella henselae (strain ATCC 49882 / DSM 28221 / CCUG 30454 / Houston 1) (Rochalimaea henselae).